The chain runs to 516 residues: 2,3-bisphosphoglycerate-independent phosphoglycerate mutase (516 aa).

Positions 14 and 64 each coordinate Mn(2+). Ser64 acts as the Phosphoserine intermediate in catalysis. Residues His125, Arg155–Asp156, Arg187, Arg193, Arg263–Arg266, and Lys337 each bind substrate. The Mn(2+) site is built by Asp404, His408, Asp445, His446, and His464.

The protein belongs to the BPG-independent phosphoglycerate mutase family. In terms of assembly, monomer. The cofactor is Mn(2+).

It catalyses the reaction (2R)-2-phosphoglycerate = (2R)-3-phosphoglycerate. Its pathway is carbohydrate degradation; glycolysis; pyruvate from D-glyceraldehyde 3-phosphate: step 3/5. Functionally, catalyzes the interconversion of 2-phosphoglycerate and 3-phosphoglycerate. This chain is 2,3-bisphosphoglycerate-independent phosphoglycerate mutase, found in Saccharophagus degradans (strain 2-40 / ATCC 43961 / DSM 17024).